The primary structure comprises 409 residues: MALRPEDPSSGFRHSNVVAFINEKMARHTKGPEFYLENISLSWEKVEDKLRAILEDSEVPSEVKEACTWGSLALGVRFAHRQAQLQRHRVRWLHGFAKLHKSAAQALASDLKKLREQQETERKEAASRLRMAQTSLVEVQKERDKELVSPHEWEQGAGWPGLATAGGVCTEGAAEEEEEAAVAAAGAAGGKGAEEEQRDVEVVAAPVEAMAPPVEAGAAPMETQFPHVEARAASMETTEKLERILLQLLGDADQEKYTYWGQKEGDLRSVETATSYFSGTTNPWSRASSEPLPVQLPASYSYSYSSPFSSFSDIPTISPPQATVTAPVPPQLPSDWEAFDTSLWSDGGPHRIDHQEHPRDRRYSEPHQQRPPVYRRPGDWDCPWCNAVNFSRRDTCFDCGKGIWLQKPH.

The interval 92–408 is required for repression of transcription; sequence WLHGFAKLHK…CGKGIWLQKP (317 aa). Positions 347–374 are disordered; the sequence is GGPHRIDHQEHPRDRRYSEPHQQRPPVY. Residues 348-368 are compositionally biased toward basic and acidic residues; the sequence is GPHRIDHQEHPRDRRYSEPHQ. Residues 376-400 form a RanBP2-type zinc finger; the sequence is RPGDWDCPWCNAVNFSRRDTCFDCG. Zn(2+) contacts are provided by C382, C385, C396, and C399.

Belongs to the TEX13 family. As to quaternary structure, interacts with CNOT1; the interaction may inhibit CNOT1 binding to mRNA and subsequently CNOT1-mediated mRNA degradation. As to expression, testis specific.

Functionally, binds to ssRNA containing the consensus sequence 5'-AGGUAA-3'. Plays a role in transcriptional repression. Required for rapid sperm motility and timely degradation of mRNA via its interaction with CNOT1. This chain is Testis-expressed protein 13A, found in Homo sapiens (Human).